Consider the following 85-residue polypeptide: Transcriptional repressor protein KorC (85 aa).

A DNA-binding region (H-T-H motif) is located at residues 28–47; sequence EVLRLAGLTGGKAAKVLGLG.

Its function is as follows. Acts with KorA as corepressor in the control of the kilC and kilE operons. The polypeptide is Transcriptional repressor protein KorC (korC) (Escherichia coli).